The chain runs to 343 residues: Protein RecA (343 aa).

66 to 73 (GPESSGKT) serves as a coordination point for ATP.

The protein belongs to the RecA family.

Its subcellular location is the cytoplasm. Can catalyze the hydrolysis of ATP in the presence of single-stranded DNA, the ATP-dependent uptake of single-stranded DNA by duplex DNA, and the ATP-dependent hybridization of homologous single-stranded DNAs. It interacts with LexA causing its activation and leading to its autocatalytic cleavage. This chain is Protein RecA, found in Dechloromonas aromatica (strain RCB).